The primary structure comprises 498 residues: ATP synthase subunit beta, chloroplastic (498 aa).

An ATP-binding site is contributed by 172-179; it reads GGAGVGKT.

Belongs to the ATPase alpha/beta chains family. In terms of assembly, F-type ATPases have 2 components, CF(1) - the catalytic core - and CF(0) - the membrane proton channel. CF(1) has five subunits: alpha(3), beta(3), gamma(1), delta(1), epsilon(1). CF(0) has four main subunits: a(1), b(1), b'(1) and c(9-12).

The protein resides in the plastid. Its subcellular location is the chloroplast thylakoid membrane. It catalyses the reaction ATP + H2O + 4 H(+)(in) = ADP + phosphate + 5 H(+)(out). Its function is as follows. Produces ATP from ADP in the presence of a proton gradient across the membrane. The catalytic sites are hosted primarily by the beta subunits. This Sorghum bicolor (Sorghum) protein is ATP synthase subunit beta, chloroplastic.